The primary structure comprises 518 residues: Delta(14)-sterol reductase erg24B (518 aa).

An N-linked (GlcNAc...) asparagine glycan is attached at asparagine 36. 6 consecutive transmembrane segments (helical) span residues 110–130 (VTMWVLSYYLLSLLMQVFLPG), 150–170 (AFLSAVLILSGCAVGTYLYGT), 182–202 (YVQVITANLIICTAIAIFVYL), 294–314 (IVLTTAFQAFYVLDALYMEPA), 321–341 (VIMDGFGFMLSFGDMVWVPFL), and 355–375 (ELGLSGILIVLAVTAAGYVIF). NADP(+) contacts are provided by residues lysine 382, arginine 386, leucine 409, tryptophan 414, and 421-422 (NY). The chain crosses the membrane as a helical span at residues 464-484 (SRGWGMIFTYFYMIYFGVLLL). NADP(+) contacts are provided by residues aspartate 490, 494–498 (CKRKY), and tyrosine 505.

This sequence belongs to the ERG4/ERG24 family.

It is found in the endoplasmic reticulum membrane. It functions in the pathway steroid metabolism; ergosterol biosynthesis. In terms of biological role, delta(14)-sterol reductase; part of the third module of ergosterol biosynthesis pathway that includes the late steps of the pathway. Catalyzes the reduction of the C14=C15 double bond within 4,4,24-trimethyl ergosta-8,14,24(28)-trienolto produce 4,4-dimethylfecosterol. The third module or late pathway involves the ergosterol synthesis itself through consecutive reactions that mainly occur in the endoplasmic reticulum (ER) membrane. Firstly, the squalene synthase erg9 catalyzes the condensation of 2 farnesyl pyrophosphate moieties to form squalene, which is the precursor of all steroids. Squalene synthase is crucial for balancing the incorporation of farnesyl diphosphate (FPP) into sterol and nonsterol isoprene synthesis. Secondly, squalene is converted into lanosterol by the consecutive action of the squalene epoxidase erg1 and the lanosterol synthase erg7. Then, the delta(24)-sterol C-methyltransferase erg6 methylates lanosterol at C-24 to produce eburicol. Eburicol is the substrate of the sterol 14-alpha demethylase encoded by cyp51A and cyp51B, to yield 4,4,24-trimethyl ergosta-8,14,24(28)-trienol. The C-14 reductase erg24 then reduces the C14=C15 double bond which leads to 4,4-dimethylfecosterol. A sequence of further demethylations at C-4, involving the C-4 demethylation complex containing the C-4 methylsterol oxidases erg25A or erg25B, the sterol-4-alpha-carboxylate 3-dehydrogenase erg26 and the 3-keto-steroid reductase erg27, leads to the production of fecosterol via 4-methylfecosterol. The C-8 sterol isomerase erg2 then catalyzes the reaction which results in unsaturation at C-7 in the B ring of sterols and thus converts fecosterol to episterol. The sterol-C5-desaturase erg3B then catalyzes the introduction of a C-5 double bond in the B ring to produce 5-dehydroepisterol. The 2 other sterol-C5-desaturases, erg3A and erg3C, seem to be less important in ergosterol biosynthesis. The C-22 sterol desaturase erg5 further converts 5-dehydroepisterol into ergosta-5,7,22,24(28)-tetraen-3beta-ol by forming the C-22(23) double bond in the sterol side chain. Finally, ergosta-5,7,22,24(28)-tetraen-3beta-ol is substrate of the C-24(28) sterol reductases erg4A and erg4B to produce ergosterol. Possible alternative sterol biosynthetic pathways might exist from fecosterol to ergosterol, depending on the activities of the erg3 isoforms. The polypeptide is Delta(14)-sterol reductase erg24B (Aspergillus fumigatus (strain ATCC MYA-4609 / CBS 101355 / FGSC A1100 / Af293) (Neosartorya fumigata)).